We begin with the raw amino-acid sequence, 102 residues long: Small ribosomal subunit protein uS10 (102 aa).

The interval 35 to 58 is disordered; sequence SGPIPLPTKTLEIPSRKSPDGEGT.

It belongs to the universal ribosomal protein uS10 family. Part of the 30S ribosomal subunit.

Functionally, involved in the binding of tRNA to the ribosomes. In Halorubrum lacusprofundi (strain ATCC 49239 / DSM 5036 / JCM 8891 / ACAM 34), this protein is Small ribosomal subunit protein uS10.